The chain runs to 134 residues: Putative nickel-responsive regulator (134 aa).

Ni(2+)-binding residues include His78, His89, His91, and Cys97.

This sequence belongs to the transcriptional regulatory CopG/NikR family. Requires Ni(2+) as cofactor.

Its function is as follows. Transcriptional regulator. This is Putative nickel-responsive regulator from Chlorobaculum tepidum (strain ATCC 49652 / DSM 12025 / NBRC 103806 / TLS) (Chlorobium tepidum).